Reading from the N-terminus, the 360-residue chain is WAT1-related protein At3g28070 (360 aa).

The next 10 helical transmembrane spans lie at 15–35 (AVFL…STLF), 45–65 (IYPF…PSLF), 84–104 (IGLL…GIEY), 108–128 (TLAS…AIIF), 140–160 (SLAK…VIFY), 190–210 (WLIG…SFIL), 224–244 (VSFL…LVVE), 248–268 (PSVW…MAIV), 286–306 (LYLA…GAIF), and 311–331 (LYLG…AVMW). The EamA domain maps to 30–158 (GISTLFKFAT…LSLIGALVVI (129 aa)).

This sequence belongs to the drug/metabolite transporter (DMT) superfamily. Plant drug/metabolite exporter (P-DME) (TC 2.A.7.4) family.

The protein resides in the membrane. The sequence is that of WAT1-related protein At3g28070 from Arabidopsis thaliana (Mouse-ear cress).